Reading from the N-terminus, the 180-residue chain is uncharacterized protein (180 aa).

This is an uncharacterized protein from Dictyostelium discoideum (Social amoeba).